We begin with the raw amino-acid sequence, 428 residues long: Sporulation kinase B (428 aa).

The Cytoplasmic segment spans residues 1-6; that stretch reads MEILKD. Residues 7-27 form a helical membrane-spanning segment; that stretch reads YLLHICFILFPILLYQVFWLG. At 28–37 the chain is on the extracellular side; that stretch reads KPAILVPKIN. Residues 38-58 traverse the membrane as a helical segment; sequence SGLVTLFACGASVLCIIFPIH. Topologically, residues 59–68 are cytoplasmic; sequence EMDYIQYGLQ. A helical transmembrane segment spans residues 69-89; sequence MIPVIICLFYISTASGLTVAA. At 90–99 the chain is on the extracellular side; the sequence is SVLCFELLFY. Residues 100 to 120 traverse the membrane as a helical segment; it reads EPSAMFVFTLLPFLIIIPILF. Residues 121-132 are Cytoplasmic-facing; it reads QKKWPFMSKAKK. A helical transmembrane segment spans residues 133 to 153; it reads LLLSLLISCVEIFLFFASSWI. Topologically, residues 154–166 are extracellular; that stretch reads LSALNILNFQKSG. Residues 167-187 form a helical membrane-spanning segment; it reads IFVYEAAVSGLFRSSVLLLSI. Residues 188-428 lie on the Cytoplasmic side of the membrane; it reads YIIESIAENI…TIKLPADLPH (241 aa). Positions 218–426 constitute a Histidine kinase domain; the sequence is SVAHEVRNPL…TVTIKLPADL (209 aa). H221 carries the phosphohistidine; by autocatalysis modification.

It localises to the cell membrane. It carries out the reaction ATP + protein L-histidine = ADP + protein N-phospho-L-histidine.. In terms of biological role, phosphorylates the sporulation-regulatory proteins spo0A and spo0F. Spo0F is required for the KinB activity. This is Sporulation kinase B (kinB) from Bacillus subtilis (strain 168).